Reading from the N-terminus, the 236-residue chain is Purine nucleoside phosphorylase DeoD-type (236 aa).

Position 4 (His4) interacts with a purine D-ribonucleoside. Phosphate contacts are provided by residues Gly20, Arg24, Arg43, and 87-90; that span reads RVGT. A purine D-ribonucleoside contacts are provided by residues 179–181 and 203–204; these read EME and SD. Asp204 (proton donor) is an active-site residue.

It belongs to the PNP/UDP phosphorylase family. Homohexamer; trimer of homodimers.

It catalyses the reaction a purine D-ribonucleoside + phosphate = a purine nucleobase + alpha-D-ribose 1-phosphate. It carries out the reaction a purine 2'-deoxy-D-ribonucleoside + phosphate = a purine nucleobase + 2-deoxy-alpha-D-ribose 1-phosphate. Catalyzes the reversible phosphorolytic breakdown of the N-glycosidic bond in the beta-(deoxy)ribonucleoside molecules, with the formation of the corresponding free purine bases and pentose-1-phosphate. The polypeptide is Purine nucleoside phosphorylase DeoD-type (Streptococcus pneumoniae (strain JJA)).